The sequence spans 110 residues: Large ribosomal subunit protein uL22 (110 aa).

Belongs to the universal ribosomal protein uL22 family. In terms of assembly, part of the 50S ribosomal subunit.

In terms of biological role, this protein binds specifically to 23S rRNA; its binding is stimulated by other ribosomal proteins, e.g. L4, L17, and L20. It is important during the early stages of 50S assembly. It makes multiple contacts with different domains of the 23S rRNA in the assembled 50S subunit and ribosome. The globular domain of the protein is located near the polypeptide exit tunnel on the outside of the subunit, while an extended beta-hairpin is found that lines the wall of the exit tunnel in the center of the 70S ribosome. In Buchnera aphidicola subsp. Acyrthosiphon pisum (strain 5A), this protein is Large ribosomal subunit protein uL22.